Consider the following 251-residue polypeptide: Ribosomal RNA small subunit methyltransferase G (251 aa).

Residues glycine 74, phenylalanine 79, 125 to 126 (AE), and arginine 144 contribute to the S-adenosyl-L-methionine site. The disordered stretch occupies residues 224-251 (RPAGLPTQHPLGAIEGAPRVESEEPEEP).

Belongs to the methyltransferase superfamily. RNA methyltransferase RsmG family.

It localises to the cytoplasm. Functionally, specifically methylates the N7 position of a guanine in 16S rRNA. The polypeptide is Ribosomal RNA small subunit methyltransferase G (Gloeobacter violaceus (strain ATCC 29082 / PCC 7421)).